The sequence spans 402 residues: Endoplasmic reticulum junction formation protein lunapark-B (402 aa).

Over 1–45 (MGAIISRWKTKPSTVELLESLDKDIKDLEEFRAKNQRLLKLWVGR) the chain is Cytoplasmic. Residues 46 to 66 (LLFYSSALYLLTCLCVYYLYF) traverse the membrane as a helical segment. Topologically, residues 67–77 (PQQWGARLITA) are lumenal. Residues 78–98 (LPLLAFPALVLLLRKMLIFLF) form a helical membrane-spanning segment. Topologically, residues 99–402 (SKRTERNNDK…EEQKKEDESN (304 aa)) are cytoplasmic. Positions 100-128 (KRTERNNDKLEDLKTQKRKILEEVMETET) form a coiled coil. A disordered region spans residues 142 to 240 (ESKKKAEAEA…PGPGSGMRPP (99 aa)). Polar residues predominate over residues 205 to 222 (SASTPAGASQAETPQQMM). The C4-type; plays a role in ER morphology zinc-finger motif lies at 276–301 (CQQCFSHNGMALKEEFEFVAFRCAYC). The tract at residues 311-402 (RPQAPRLPEF…EEQKKEDESN (92 aa)) is disordered. Residues 321-330 (SFERRLRSES) show a composition bias toward basic and acidic residues. Over residues 341–352 (TPEDSDAPEDDM) the composition is skewed to acidic residues. The span at 385–402 (PHAEAEALEEQKKEDESN) shows a compositional bias: basic and acidic residues.

Belongs to the lunapark family. As to quaternary structure, homodimer; homodimerization requires the C4-type zinc finger motif and decreases during mitosis in a phosphorylation-dependent manner. In terms of processing, phosphorylated. Phosphorylation occurs during interphase. Phosphorylation also occurs during mitosis; these phosphorylations reduce both its homodimerization and the ER three-way tubular junction formation.

It localises to the endoplasmic reticulum membrane. Its function is as follows. Endoplasmic reticulum (ER)-shaping membrane protein that plays a role in determining ER morphology. Involved in the stabilization of nascent three-way ER tubular junctions within the ER network. May also play a role as a curvature-stabilizing protein within three-way ER tubular junction network. The protein is Endoplasmic reticulum junction formation protein lunapark-B (lnpkb) of Danio rerio (Zebrafish).